The sequence spans 66 residues: DNA-directed RNA polymerase subunit omega (66 aa).

Belongs to the RNA polymerase subunit omega family. In terms of assembly, the RNAP catalytic core consists of 2 alpha, 1 beta, 1 beta' and 1 omega subunit. When a sigma factor is associated with the core the holoenzyme is formed, which can initiate transcription.

The catalysed reaction is RNA(n) + a ribonucleoside 5'-triphosphate = RNA(n+1) + diphosphate. Functionally, promotes RNA polymerase assembly. Latches the N- and C-terminal regions of the beta' subunit thereby facilitating its interaction with the beta and alpha subunits. This is DNA-directed RNA polymerase subunit omega from Bacillus licheniformis (strain ATCC 14580 / DSM 13 / JCM 2505 / CCUG 7422 / NBRC 12200 / NCIMB 9375 / NCTC 10341 / NRRL NRS-1264 / Gibson 46).